A 343-amino-acid polypeptide reads, in one-letter code: MKIKALSKLKPEQGIWMTEVDKPEVGHNDILIKIKKTAICGTDVHIYNWDEWSQKTIPVPMVVGHEYVGEVVAIGQEVRGFEIGDRVSGEGHITCGHCRNCRGGRTHLCRNTIGVGVNREGAFAEYLVIPAFNAFKIPDEISDDLASIFDPFGNAVHTALSFDLVGEDVLITGAGPIGIMAAAVAKHVGARHVVITDVNEYRLELARKMGVTRAVNVAEEKLEDVMAELGMTEGFDVGLEMSGNPAAFNSMLTTMNHGGRIALLGIPPSDMGIDWNQVIFKGLVIKGIYGREMFETWYKMASLIQSGLDLSPIITHHYKIDDFQEGFDVMRSGMSGKVILDWE.

Cys40 contacts Zn(2+). Active-site charge relay system residues include Thr42 and His45. Zn(2+) is bound by residues His65, Glu66, Cys95, Cys98, Cys101, and Cys109. NAD(+)-binding positions include Ile177, Asp197, Arg202, 264–266, and 288–289; these read LGI and IY.

It belongs to the zinc-containing alcohol dehydrogenase family. In terms of assembly, homotetramer. Zn(2+) serves as cofactor.

The protein resides in the cytoplasm. The catalysed reaction is L-threonine + NAD(+) = (2S)-2-amino-3-oxobutanoate + NADH + H(+). Its pathway is amino-acid degradation; L-threonine degradation via oxydo-reductase pathway; glycine from L-threonine: step 1/2. Functionally, catalyzes the NAD(+)-dependent oxidation of L-threonine to 2-amino-3-ketobutyrate. The sequence is that of L-threonine 3-dehydrogenase from Vibrio parahaemolyticus serotype O3:K6 (strain RIMD 2210633).